We begin with the raw amino-acid sequence, 94 residues long: Small ribosomal subunit protein uS19 (94 aa).

Belongs to the universal ribosomal protein uS19 family.

Its function is as follows. Protein S19 forms a complex with S13 that binds strongly to the 16S ribosomal RNA. The sequence is that of Small ribosomal subunit protein uS19 from Wolbachia pipientis subsp. Culex pipiens (strain wPip).